The primary structure comprises 318 residues: Malate dehydrogenase (318 aa).

Residues Gly10–Gly15 and Asp34 each bind NAD(+). The substrate site is built by Arg83 and Arg89. NAD(+)-binding positions include Asn96 and Ile119–Asn121. Substrate contacts are provided by Asn121 and Arg152. The Proton acceptor role is filled by His176.

It belongs to the LDH/MDH superfamily. MDH type 3 family.

The enzyme catalyses (S)-malate + NAD(+) = oxaloacetate + NADH + H(+). In terms of biological role, catalyzes the reversible oxidation of malate to oxaloacetate. This is Malate dehydrogenase from Geotalea daltonii (strain DSM 22248 / JCM 15807 / FRC-32) (Geobacter daltonii).